Consider the following 546-residue polypeptide: Chaperonin GroEL (546 aa).

ATP is bound by residues 30–33 (TLGP), lysine 51, 87–91 (DGTTT), glycine 415, and aspartate 495.

Belongs to the chaperonin (HSP60) family. As to quaternary structure, forms a cylinder of 14 subunits composed of two heptameric rings stacked back-to-back. Interacts with the co-chaperonin GroES.

The protein localises to the cytoplasm. The catalysed reaction is ATP + H2O + a folded polypeptide = ADP + phosphate + an unfolded polypeptide.. Its function is as follows. Together with its co-chaperonin GroES, plays an essential role in assisting protein folding. The GroEL-GroES system forms a nano-cage that allows encapsulation of the non-native substrate proteins and provides a physical environment optimized to promote and accelerate protein folding. The polypeptide is Chaperonin GroEL (Alteromonas mediterranea (strain DSM 17117 / CIP 110805 / LMG 28347 / Deep ecotype)).